Here is a 1692-residue protein sequence, read N- to C-terminus: Fatty acid synthase alpha subunit hexA (1692 aa).

The interval 44-80 (AVEEPVDETPAPETAPERPPLSRAKTAAVKPQETAAP) is disordered. The region spanning 90-174 (LSAEEIVRAL…RVSSALLSKL (85 aa)) is the Carrier domain. At Ser125 the chain carries O-(pantetheine 4'-phosphoryl)serine. A ketoreductase (KR) domain region spans residues 508 to 746 (FAGKNILITG…IAMLMTPELV (239 aa)). The 483-residue stretch at 948–1430 (KEYLHEVAVE…QKGGQVVGVA (483 aa)) folds into the Ketosynthase family 3 (KS3) domain. Cys1135 serves as the catalytic For beta-ketoacyl synthase activity. The disordered stretch occupies residues 1263–1287 (GQAQLDKSSPSTNTTSRTSSVSLAR). The segment covering 1270 to 1284 (SSPSTNTTSRTSSVS) has biased composition (low complexity). Residues His1315 and His1356 each act as for beta-ketoacyl synthase activity in the active site. A Mg(2+)-binding site is contributed by Asp1569. Residues 1569–1571 (DLV), 1615–1625 (EAVFKCLHTQT), 1639–1642 (KSDN), and 1668–1670 (ISH) contribute to the acetyl-CoA site. Position 1669 (Ser1669) interacts with Mg(2+).

This sequence belongs to the thiolase-like superfamily. Fungal fatty acid synthetase subunit alpha family. As to quaternary structure, [Alpha(6)beta(6)] hexamers of two multifunctional subunits (alpha and beta). In terms of processing, 4'-phosphopantetheine is transferred from CoA to a specific serine of the acyl carrier domain by the C-terminal PPT domain. This modification is essential for activity because fatty acids are bound in thioester linkage to the sulfhydryl of the prosthetic group.

It carries out the reaction acetyl-CoA + n malonyl-CoA + 2n NADPH + 4n H(+) = a long-chain-acyl-CoA + n CoA + n CO2 + 2n NADP(+).. The enzyme catalyses a fatty acyl-[ACP] + malonyl-[ACP] + H(+) = a 3-oxoacyl-[ACP] + holo-[ACP] + CO2. The catalysed reaction is a (3R)-hydroxyacyl-[ACP] + NADP(+) = a 3-oxoacyl-[ACP] + NADPH + H(+). It participates in mycotoxin biosynthesis. Fatty acid synthase alpha subunit; part of the fragmented gene cluster that mediates the biosynthesis of dothistromin (DOTH), a polyketide toxin very similar in structure to the aflatoxin precursor, versicolorin B. The first step of the pathway is the conversion of acetate to norsolorinic acid (NOR) and requires the fatty acid synthase subunits hexA and hexB, as well as the polyketide synthase pksA. PksA combines a hexanoyl starter unit and 7 malonyl-CoA extender units to synthesize the precursor NOR. The hexanoyl starter unit is provided to the acyl-carrier protein (ACP) domain by the fungal fatty acid synthase hexA/hexB. The second step is the conversion of NOR to averantin (AVN) and requires the norsolorinic acid ketoreductase nor1, which catalyzes the dehydration of norsolorinic acid to form (1'S)-averantin. The cytochrome P450 monooxygenase avnA then catalyzes the hydroxylation of AVN to 5'hydroxyaverantin (HAVN). The next step is performed by adhA that transforms HAVN to averufin (AVF). Averufin might then be converted to hydroxyversicolorone by cypX and avfA. Hydroxyversicolorone is further converted versiconal hemiacetal acetate (VHA) by moxY. VHA is then the substrate for the versiconal hemiacetal acetate esterase est1 to yield versiconal (VAL). Versicolorin B synthase vbsA then converts VAL to versicolorin B (VERB) by closing the bisfuran ring. Then, the activity of the versicolorin B desaturase verB leads to versicolorin A (VERA). DotB, a predicted chloroperoxidase, may perform epoxidation of the A-ring of VERA. Alternatively, a cytochrome P450, such as cypX or avnA could catalyze this step. It is also possible that another, uncharacterized, cytochrome P450 enzyme is responsible for this step. Opening of the epoxide could potentially be achieved by the epoxide hydrolase epoA. However, epoA seems not to be required for DOTH biosynthesis, but other epoxide hydrolases may have the ability to complement this hydrolysis. Alternatively, opening of the epoxide ring could be achieved non-enzymatically. The next step is the deoxygenation of ring A to yield the 5,8-dihydroxyanthraquinone which is most likely catalyzed by the NADPH dehydrogenase encoded by ver1. The last stages of DOTH biosynthesis are proposed to involve hydroxylation of the bisfuran. OrdB and norB might have oxidative roles here. An alternative possibility is that cytochrome P450 monoogenases such as avnA and cypX might perform these steps in addition to previously proposed steps. The chain is Fatty acid synthase alpha subunit hexA from Dothistroma septosporum (strain NZE10 / CBS 128990) (Red band needle blight fungus).